The chain runs to 367 residues: Flagellar P-ring protein (367 aa).

Positions M1–A22 are cleaved as a signal peptide.

Belongs to the FlgI family. In terms of assembly, the basal body constitutes a major portion of the flagellar organelle and consists of four rings (L,P,S, and M) mounted on a central rod.

It is found in the periplasm. It localises to the bacterial flagellum basal body. In terms of biological role, assembles around the rod to form the L-ring and probably protects the motor/basal body from shearing forces during rotation. The chain is Flagellar P-ring protein from Legionella pneumophila (strain Corby).